Here is a 130-residue protein sequence, read N- to C-terminus: MSMQDPIADMLTRIRNGQAANKVSVSMPSAKLKVAIAQTLKEEGYITDYTVAGEAKPVLEITLKYFQGQPVVETIQRVSRPGLRIYKGKNDLPKVMGGLGVAIVSTSKGLMTDRAARQQGMGGEVICYVA.

Belongs to the universal ribosomal protein uS8 family. Part of the 30S ribosomal subunit. Contacts proteins S5 and S12.

In terms of biological role, one of the primary rRNA binding proteins, it binds directly to 16S rRNA central domain where it helps coordinate assembly of the platform of the 30S subunit. This Shewanella loihica (strain ATCC BAA-1088 / PV-4) protein is Small ribosomal subunit protein uS8.